Consider the following 188-residue polypeptide: Surfactant protein C (188 aa).

Residues 1–23 (MDMGSKEALMESPPDYSAAPRGR) constitute a propeptide that is removed on maturation. S-palmitoyl cysteine attachment occurs at residues Cys28 and Cys29. Residues 59 to 188 (HMSQKHTEMV…LCGEVPLIYI (130 aa)) constitute a propeptide that is removed on maturation. The BRICHOS domain maps to 94–188 (FPIGSTGIVT…LCGEVPLIYI (95 aa)). A disulfide bond links Cys121 and Cys180. The disordered stretch occupies residues 144 to 164 (NPAEPPTQRGQDKGPAAGPAS).

The protein localises to the secreted. Its subcellular location is the extracellular space. It is found in the surface film. Its function is as follows. Pulmonary surfactant associated proteins promote alveolar stability by lowering the surface tension at the air-liquid interface in the peripheral air spaces. In Oryctolagus cuniculus (Rabbit), this protein is Surfactant protein C (SFTPC).